We begin with the raw amino-acid sequence, 130 residues long: Protein Wnt-9 (130 aa).

A lipid anchor (O-palmitoleoyl serine; by PORCN) is attached at serine 1. The interval 41–69 (AGERTIARSRRRPREQRGQRRPKVSDGAL) is disordered. Residues 47 to 62 (ARSRRRPREQRGQRRP) are compositionally biased toward basic residues. Asparagine 97 carries N-linked (GlcNAc...) asparagine glycosylation. A disulfide bridge links cysteine 100 with cysteine 111.

The protein belongs to the Wnt family. Post-translationally, palmitoleoylation is required for efficient binding to frizzled receptors. Depalmitoleoylation leads to Wnt signaling pathway inhibition.

The protein resides in the secreted. Its subcellular location is the extracellular space. It is found in the extracellular matrix. Its function is as follows. Ligand for members of the frizzled family of seven transmembrane receptors. Probable developmental protein. May be a signaling molecule which affects the development of discrete regions of tissues. Is likely to signal over only few cell diameters. This Eptatretus stoutii (Pacific hagfish) protein is Protein Wnt-9 (WNT-9).